The following is a 205-amino-acid chain: Small ribosomal subunit protein uS4 (205 aa).

One can recognise an S4 RNA-binding domain in the interval Ser94–Val172.

The protein belongs to the universal ribosomal protein uS4 family. In terms of assembly, part of the 30S ribosomal subunit. Contacts protein S5. The interaction surface between S4 and S5 is involved in control of translational fidelity.

In terms of biological role, one of the primary rRNA binding proteins, it binds directly to 16S rRNA where it nucleates assembly of the body of the 30S subunit. With S5 and S12 plays an important role in translational accuracy. The protein is Small ribosomal subunit protein uS4 of Rickettsia bellii (strain OSU 85-389).